A 125-amino-acid polypeptide reads, in one-letter code: Holo-[acyl-carrier-protein] synthase (125 aa).

Glutamate 9 and glutamine 58 together coordinate Mg(2+).

Belongs to the P-Pant transferase superfamily. AcpS family. Requires Mg(2+) as cofactor.

It localises to the cytoplasm. The catalysed reaction is apo-[ACP] + CoA = holo-[ACP] + adenosine 3',5'-bisphosphate + H(+). Functionally, transfers the 4'-phosphopantetheine moiety from coenzyme A to a Ser of acyl-carrier-protein. The sequence is that of Holo-[acyl-carrier-protein] synthase from Rhodopirellula baltica (strain DSM 10527 / NCIMB 13988 / SH1).